A 131-amino-acid polypeptide reads, in one-letter code: uncharacterized protein (131 aa).

2 helical membrane-spanning segments follow: residues 5-25 and 34-54; these read VQPI…YVLV and MAVT…YVMN. The disordered stretch occupies residues 62–131; sequence AAFKKAAKQS…KNKKKNRALF (70 aa). 2 stretches are compositionally biased toward basic residues: residues 66–92 and 122–131; these read KAAK…RVSH and KNKKKNRALF.

Its subcellular location is the cell membrane. This is an uncharacterized protein from Bacillus subtilis (strain 168).